Here is a 546-residue protein sequence, read N- to C-terminus: CTP synthase (546 aa).

Residues 1 to 266 (MTTRYIFVTG…DELVVKRFSL (266 aa)) are amidoligase domain. CTP is bound at residue Ser14. UTP is bound at residue Ser14. ATP contacts are provided by residues 15-20 (SLGKGI) and Asp72. Asp72 and Glu140 together coordinate Mg(2+). CTP contacts are provided by residues 147 to 149 (DIE), 187 to 192 (KTKPTQ), and Lys223. UTP-binding positions include 187–192 (KTKPTQ) and Lys223. 239-241 (KDV) contributes to the ATP binding site. The Glutamine amidotransferase type-1 domain maps to 291–542 (VIGMVGKYIE…VAAASAHQKR (252 aa)). Residue Gly352 coordinates L-glutamine. Catalysis depends on Cys379, which acts as the Nucleophile; for glutamine hydrolysis. L-glutamine is bound by residues 380–383 (LGMQ), Glu403, and Arg470. Residues His515 and Glu517 contribute to the active site.

The protein belongs to the CTP synthase family. Homotetramer.

The enzyme catalyses UTP + L-glutamine + ATP + H2O = CTP + L-glutamate + ADP + phosphate + 2 H(+). It carries out the reaction L-glutamine + H2O = L-glutamate + NH4(+). The catalysed reaction is UTP + NH4(+) + ATP = CTP + ADP + phosphate + 2 H(+). It functions in the pathway pyrimidine metabolism; CTP biosynthesis via de novo pathway; CTP from UDP: step 2/2. With respect to regulation, allosterically activated by GTP, when glutamine is the substrate; GTP has no effect on the reaction when ammonia is the substrate. The allosteric effector GTP functions by stabilizing the protein conformation that binds the tetrahedral intermediate(s) formed during glutamine hydrolysis. Inhibited by the product CTP, via allosteric rather than competitive inhibition. Its function is as follows. Catalyzes the ATP-dependent amination of UTP to CTP with either L-glutamine or ammonia as the source of nitrogen. Regulates intracellular CTP levels through interactions with the four ribonucleotide triphosphates. This chain is CTP synthase, found in Shewanella oneidensis (strain ATCC 700550 / JCM 31522 / CIP 106686 / LMG 19005 / NCIMB 14063 / MR-1).